Reading from the N-terminus, the 262-residue chain is Type III pantothenate kinase (262 aa).

9–16 (DAGNSRIK) is a binding site for ATP. Substrate contacts are provided by residues Tyr-96 and 103–106 (GSDR). The Proton acceptor role is filled by Asp-105. Residue Thr-129 coordinates ATP. Position 189 (Thr-189) interacts with substrate.

Belongs to the type III pantothenate kinase family. Homodimer. NH4(+) is required as a cofactor. The cofactor is K(+).

It localises to the cytoplasm. It catalyses the reaction (R)-pantothenate + ATP = (R)-4'-phosphopantothenate + ADP + H(+). It functions in the pathway cofactor biosynthesis; coenzyme A biosynthesis; CoA from (R)-pantothenate: step 1/5. In terms of biological role, catalyzes the phosphorylation of pantothenate (Pan), the first step in CoA biosynthesis. In Burkholderia vietnamiensis (strain G4 / LMG 22486) (Burkholderia cepacia (strain R1808)), this protein is Type III pantothenate kinase.